The chain runs to 302 residues: Glycine--tRNA ligase alpha subunit (302 aa).

It belongs to the class-II aminoacyl-tRNA synthetase family. As to quaternary structure, tetramer of two alpha and two beta subunits.

It is found in the cytoplasm. The enzyme catalyses tRNA(Gly) + glycine + ATP = glycyl-tRNA(Gly) + AMP + diphosphate. The protein is Glycine--tRNA ligase alpha subunit of Enterococcus faecalis (strain ATCC 700802 / V583).